Here is a 1262-residue protein sequence, read N- to C-terminus: Synaptopodin-2 (1262 aa).

The segment at 1-174 is interaction with VPS18; it reads MGTGDFICIS…PGSQEGHLVE (174 aa). The PDZ domain maps to 6-88; it reads FICISMTGGA…SLHLLIKRPT (83 aa). Polar residues-rich tracts occupy residues 89 to 105 and 246 to 260; these read SGTSEALDSETENTNHQ and TSLTSGTTVQTSSGR. 2 disordered regions span residues 89 to 114 and 239 to 276; these read SGTSEALDSETENTNHQHLPHGGPME and PAPEKADTSLTSGTTVQTSSGRELTVIQGRDPGGTGLP. Phosphoserine occurs at positions 304, 323, and 324. The segment at 323 to 363 is disordered; that stretch reads SSEGTEQGEDQRSGKDQGRPHKHRARHARLRRSESLSEKQV. Position 327 is a phosphothreonine (Thr327). Residues 331-341 are compositionally biased toward basic and acidic residues; sequence EDQRSGKDQGR. Residues 342-352 are compositionally biased toward basic residues; the sequence is PHKHRARHARL. The segment covering 353 to 363 has biased composition (basic and acidic residues); sequence RRSESLSEKQV. Positions 392 to 400 match the Nuclear localization signal motif; sequence KKRRRRARK. 3 interaction with ACTN2 regions span residues 477 to 658, 659 to 922, and 899 to 1153; these read MEML…FYDS, SEQI…PPVA, and QSPT…NIEE. 2 disordered regions span residues 503-576 and 592-703; these read AQNE…GPQR and NQTA…SPNP. Residues Ser518, Ser543, Ser544, Ser546, and Ser549 each carry the phosphoserine modification. F-actin binding regions lie at residues 530 to 658 and 659 to 801; these read TSYQ…FYDS and SEQI…VTAV. Residues 540–552 show a composition bias toward low complexity; sequence RMQSSVSESSFQM. The interval 554–560 is interaction with YWHAB; the sequence is RSLGSVP. Phosphoserine; by PKA is present on Ser558. Polar residues-rich tracts occupy residues 558–569 and 592–606; these read SVPQQNGFSGVS and NQTAAPFSPTQSVTS. Ser599 is subject to Phosphoserine. Residues 602-809 are interaction with YWHAB; sequence QSVTSPIPDF…AVSSIKIAQP (208 aa). Thr605 bears the Phosphothreonine; by PKA and CaMK2 mark. Residue Ser606 is modified to Phosphoserine. Pro residues-rich tracts occupy residues 609-625 and 639-650; these read PDFPAPPPYSAVSPPPE and AQPPPWPQPAPW. An interaction with BAG3 region spans residues 610-621; the sequence is DFPAPPPYSAVS. The PPPY motif signature appears at 614 to 617; it reads PPPY. A Phosphotyrosine modification is found at Tyr617. Phosphoserine is present on Ser621. Positions 659–914 are F-actin bundling activity; the sequence is SEQIASRDER…LPASWKYSSN (256 aa). Residues Ser700 and Ser724 each carry the phosphoserine modification. Disordered stretches follow at residues 741-799 and 833-868; these read MQSS…PQVT and VVSHNYTPKPSAPTPLVNAAPAGAGGPSNELPGMSG. The interval 745–898 is actin binding; that stretch reads AKQKTPPPVA…DTVQAHTVRA (154 aa). At Thr749 the chain carries Phosphothreonine. Positions 756–782 are enriched in low complexity; it reads KPAVKTSSSSQPVAPVSPVWSPGVAPA. Ser772 and Ser776 each carry phosphoserine. Over residues 786–799 the composition is skewed to polar residues; the sequence is AFSTTNPPNPPQVT. The tract at residues 808-1153 is interaction with FLNC; it reads QPTCPPARPA…EAFRPRNIEE (346 aa). 3 positions are modified to phosphoserine: Ser900, Ser904, and Ser908. The segment at 933–957 is disordered; the sequence is LAAIKSQPPGAQASKTSKKKGKKPL. Residues 999-1018 form an interaction with ZYX region; the sequence is PAMKQALPPRQADIGSPTNA. Residues Ser1014, Ser1055, and Ser1090 each carry the phosphoserine modification.

It belongs to the synaptopodin family. As to quaternary structure, may self-associate in muscle cells under oxidative stress. Binds F-actin. Interacts with ACTN2; ACTN2 is proposed to anchor SYOP2 at Z lines in mature myocytes. Interacts with AKAP6, PPP3CA and CAMK2A. Interacts (phosphorylated form) with YWHAB; YWHAB competes with ACTN2 for interaction with SYNPO2. Interacts with KPNA2; mediating nuclear import of SYNOP2; dependent on interaction with YWHAB. Interacts with IPO13; may be implicated in SYNOP2 nuclear import. Interacts with ZYX, FLNC, ILK. Interacts with BAG3 (via WW 1 domain). May associate with the CASA complex consisting of HSPA8, HSPB8 and BAG3. Interacts with VPS18. Post-translationally, phosphorylated by PKA, and by CaMK2 at multiple sites. Dephosphorylated by calcineurin at Ser-558 and Thr-605; abrogating interaction with YWHAB and impairing nuclear import.

Its subcellular location is the nucleus. It is found in the cytoplasm. The protein resides in the cytoskeleton. The protein localises to the myofibril. It localises to the sarcomere. Its subcellular location is the z line. It is found in the cell junction. The protein resides in the focal adhesion. Its function is as follows. Has an actin-binding and actin-bundling activity. Can induce the formation of F-actin networks. At the sarcomeric Z lines is proposed to act as adapter protein that links nascent myofibers to the sarcolemma via ZYX and may play a role in early assembly and stabilization of the Z lines. Involved in autophagosome formation. May play a role in chaperone-assisted selective autophagy (CASA) involved in Z lines maintenance in striated muscle under mechanical tension; may link the client-processing CASA chaperone machinery to a membrane-tethering and fusion complex providing autophagosome membranes. Involved in regulation of cell migration. May be a tumor suppressor. The polypeptide is Synaptopodin-2 (Synpo2) (Rattus norvegicus (Rat)).